The primary structure comprises 202 residues: Interleukin-17D (202 aa).

The N-terminal stretch at 1–15 is a signal peptide; it reads MLVAGFLLALPPSWA. The interval 65 to 85 is disordered; the sequence is QARNASCPAGGRPADRRFRPP. 2 N-linked (GlcNAc...) asparagine glycosylation sites follow: asparagine 68 and asparagine 181.

The protein belongs to the IL-17 family. As to expression, expressed preferentially in adipose, skeletal muscle and CNS.

The protein resides in the secreted. Induces expression of IL6, CXCL8/IL8, and CSF2/GM-CSF from endothelial cells. The sequence is that of Interleukin-17D (IL17D) from Homo sapiens (Human).